A 139-amino-acid polypeptide reads, in one-letter code: D-ribose pyranase (139 aa).

Residue H20 is the Proton donor of the active site. Residues D28, H106, and 128-130 each bind substrate; that span reads YAN.

This sequence belongs to the RbsD / FucU family. RbsD subfamily. Homodecamer.

The protein resides in the cytoplasm. It catalyses the reaction beta-D-ribopyranose = beta-D-ribofuranose. Its pathway is carbohydrate metabolism; D-ribose degradation; D-ribose 5-phosphate from beta-D-ribopyranose: step 1/2. In terms of biological role, catalyzes the interconversion of beta-pyran and beta-furan forms of D-ribose. The sequence is that of D-ribose pyranase from Enterobacter sp. (strain 638).